The following is a 276-amino-acid chain: Glucosamine-6-phosphate deaminase 2 (276 aa).

D72 functions as the Proton acceptor; for enolization step in the catalytic mechanism. Residues 103 to 131 are a coiled coil; it reads NAHILDGNAADLQAECDAFEEKIKEAGGI. The For ring-opening step role is filled by D141. H143 (proton acceptor; for ring-opening step) is an active-site residue. Residue E148 is the For ring-opening step of the active site. The residue at position 161 (T161) is a Phosphothreonine.

The protein belongs to the glucosamine/galactosamine-6-phosphate isomerase family. As to quaternary structure, homohexamer.

It is found in the cytoplasm. The enzyme catalyses alpha-D-glucosamine 6-phosphate + H2O = beta-D-fructose 6-phosphate + NH4(+). Its pathway is nucleotide-sugar biosynthesis; UDP-N-acetyl-alpha-D-glucosamine biosynthesis; alpha-D-glucosamine 6-phosphate from D-fructose 6-phosphate: step 1/1. Allosterically activated by N-acetylglucosamine-6-phosphate (GlcNAc6P). In terms of biological role, catalyzes the reversible conversion of alpha-D-glucosamine 6-phosphate (GlcN-6P) into beta-D-fructose 6-phosphate (Fru-6P) and ammonium ion, a regulatory reaction step in de novo uridine diphosphate-N-acetyl-alpha-D-glucosamine (UDP-GlcNAc) biosynthesis via hexosamine pathway. Deamination is coupled to aldo-keto isomerization mediating the metabolic flux from UDP-GlcNAc toward Fru-6P. At high ammonium level can drive amination and isomerization of Fru-6P toward hexosamines and UDP-GlcNAc synthesis. Has a role in fine tuning the metabolic fluctuations of cytosolic UDP-GlcNAc and their effects on hyaluronan synthesis that occur during tissue remodeling. The chain is Glucosamine-6-phosphate deaminase 2 from Mus musculus (Mouse).